Consider the following 1902-residue polypeptide: Rho GTPase-activating protein 21-B (1902 aa).

8 disordered regions span residues 1-44, 78-97, 284-317, 348-369, 409-450, 581-603, 613-632, and 879-902; these read MATR…EGFC, TSVK…RPRN, RTNR…NVPM, PAAH…GSHQ, NTTD…SQER, TRNF…RSGF, IPTP…DDGI, and KARE…DVFS. The span at 10 to 22 shows a compositional bias: polar residues; sequence EQQQEPSSPASEI. Positions 77–162 constitute a PDZ domain; that stretch reads HTSVKDEENG…TLELSVMPKD (86 aa). Residues 305 to 317 show a composition bias toward low complexity; it reads TTSPSSSTPNVPM. Polar residues predominate over residues 409–424; it reads NTTDYNQMLPNRSSGQ. The region spanning 903–1016 is the PH domain; sequence DSNKEGFLYF…WIKAIQENGN (114 aa). Polar residues predominate over residues 1039–1063; that stretch reads TMMSSSSNKTEPSPKAQRQTLSIRQ. Residues 1039-1095 form a disordered region; it reads TMMSSSSNKTEPSPKAQRQTLSIRQQFRAGKPDDDISPPKDKGSWRRIMKKPFEKKP. Positions 1068 to 1082 are enriched in basic and acidic residues; it reads GKPDDDISPPKDKGS. Residues 1103 to 1295 enclose the Rho-GAP domain; sequence VRLDDCPPAH…TLIQKHDWFF (193 aa). 6 disordered regions span residues 1306-1357, 1375-1394, 1494-1520, 1559-1704, 1729-1748, and 1803-1890; these read TVHE…GSGK, RKRK…DELD, MSDS…VSPE, VQSV…EPAW, QKAN…RHTL, and TSTS…KLSG. Positions 1339 to 1357 are enriched in low complexity; the sequence is SDSATSDSAKSKGSWGSGK. Residues 1494 to 1511 are compositionally biased toward polar residues; the sequence is MSDSGTMLSTSSQASVQG. Composition is skewed to basic and acidic residues over residues 1575-1585 and 1601-1613; these read SELVSEGRPME and FDRR…EEPS. Positions 1614–1630 are enriched in polar residues; sequence RNVQVNSEGSPSCTEGS. 2 stretches are compositionally biased toward basic and acidic residues: residues 1634-1652 and 1661-1673; these read KMDR…DTLS and TDSD…KTEE. Basic residues predominate over residues 1737-1748; that stretch reads RKKKNIRRRHTL. The segment covering 1865 to 1878 has biased composition (polar residues); sequence NGDSFQSKNKNNFS.

The protein resides in the golgi apparatus membrane. The protein localises to the cell junction. Its subcellular location is the cytoplasmic vesicle membrane. It is found in the cytoplasm. It localises to the cytoskeleton. Its function is as follows. GTPase-activating protein (GAP) for rhoa and cdc42. The polypeptide is Rho GTPase-activating protein 21-B (arhgap21-b) (Xenopus laevis (African clawed frog)).